Consider the following 481-residue polypeptide: Protein FIZZY-RELATED 3 (481 aa).

The tract at residues 100–165 (PAGGQGSASS…RKVPKTPHKV (66 aa)) is disordered. A compositionally biased stretch (low complexity) spans 125–136 (SNSSPSSPFSPS). Over residues 154–163 (PPRKVPKTPH) the composition is skewed to basic residues. WD repeat units lie at residues 172 to 209 (QDDF…VTKL), 213 to 252 (GPND…RVRT), 255 to 292 (GHQT…DFVS), 296 to 335 (GHKS…PILK), 338 to 380 (EHTA…QLNS), 382 to 423 (DTGS…KVAT), and 426 to 465 (GHSM…KMQT).

Belongs to the WD repeat CDC20/Fizzy family. In terms of assembly, associates with the APC/C complex. Interacts with CDC20-1, CDC20-2, CYCA1-1, CYCA3-4, CYCB1-1 and CYCB1-2. Binds to GIG1 and PYM.

Its pathway is protein modification; protein ubiquitination. Activator protein that regulates the ubiquitin ligase activity and substrate specificity of the anaphase promoting complex/cyclosome (APC/C). In Arabidopsis thaliana (Mouse-ear cress), this protein is Protein FIZZY-RELATED 3 (FZR3).